A 97-amino-acid polypeptide reads, in one-letter code: Small ribosomal subunit protein bS20 (97 aa).

Belongs to the bacterial ribosomal protein bS20 family.

In terms of biological role, binds directly to 16S ribosomal RNA. The chain is Small ribosomal subunit protein bS20 from Prochlorococcus marinus (strain MIT 9312).